Consider the following 146-residue polypeptide: MLLCDTNIWLALALSGHVHHRASRAWLDTINAPGVIHFCRATQQSLLRLLTNRTVLGAYGSPPLTNREAWAAYAAFLDDDRIVLAGAEPDGLEAQWRAFAVRQSPAPKVWMDAYLAAFALTGGFELVTTDTAFTQYGGIELRLLAK.

In terms of domain architecture, PINc spans 3–142; sequence LCDTNIWLAL…FTQYGGIELR (140 aa). Residues D5 and D112 each coordinate Mg(2+).

The protein belongs to the PINc/VapC protein family. Mg(2+) serves as cofactor.

Functionally, toxic component of a type II toxin-antitoxin (TA) system. An RNase. Its toxic effect is neutralized by coexpression with cognate antitoxin VapB41. The polypeptide is Ribonuclease VapC41 (Mycobacterium tuberculosis (strain CDC 1551 / Oshkosh)).